A 445-amino-acid polypeptide reads, in one-letter code: MGITILKNEGLDFHARISTPLSEIDDDIQKELLDLTKKVKIAGFRAGKVPVSIVKKKYGTSVRNDIIERRINNSVNHVIKEHNLNIIGRPKIEELQNESDKALEFTVKIELLPKITIPDLKKISLDRPKLEVNSKDVEEQLEKLAALTKNYTKESKAKIKDGDQVTIDAIGYIKEKAFEDGKLNDFKVIIGSNALIPGFEKQLIGSKTGSKVDVNVTFPENYHAKDLAGKDARFVVQIKAVHTAEPTVIDDEFAKKFQSNSLEELRTHFTKQIENESEEAINTIMKMNLFDKLEKLLDFDVPESLLEQEKNILKSGTDKNEQDESLLKDKSSKEITAYYNKLALRRVRIGLLLAEYAKSKNLQLEPDDLRKVIMQQARNFPGQENMIFDFYKNNPRAIEGLKGPALEDKAVQYIFNHEIKLKEKKYTKEELEKYLEAEEQRITLI.

Residues 162 to 247 (GDQVTIDAIG…IKAVHTAEPT (86 aa)) form the PPIase FKBP-type domain.

This sequence belongs to the FKBP-type PPIase family. Tig subfamily.

It is found in the cytoplasm. The catalysed reaction is [protein]-peptidylproline (omega=180) = [protein]-peptidylproline (omega=0). Its function is as follows. Involved in protein export. Acts as a chaperone by maintaining the newly synthesized protein in an open conformation. Functions as a peptidyl-prolyl cis-trans isomerase. This Rickettsia conorii (strain ATCC VR-613 / Malish 7) protein is Trigger factor.